A 198-amino-acid chain; its full sequence is Recombination protein RecR (198 aa).

A C4-type zinc finger spans residues 57–72 (CSLCGNLDTVDPCHIC). Residues 80 to 175 (GLICVVETVG…TVTRVGHGVP (96 aa)) enclose the Toprim domain.

It belongs to the RecR family.

May play a role in DNA repair. It seems to be involved in an RecBC-independent recombinational process of DNA repair. It may act with RecF and RecO. The protein is Recombination protein RecR of Gluconobacter oxydans (strain 621H) (Gluconobacter suboxydans).